The primary structure comprises 298 residues: Porphobilinogen deaminase (298 aa).

S-(dipyrrolylmethanemethyl)cysteine is present on cysteine 242.

The protein belongs to the HMBS family. As to quaternary structure, monomer. It depends on dipyrromethane as a cofactor.

It catalyses the reaction 4 porphobilinogen + H2O = hydroxymethylbilane + 4 NH4(+). Its pathway is porphyrin-containing compound metabolism; protoporphyrin-IX biosynthesis; coproporphyrinogen-III from 5-aminolevulinate: step 2/4. In terms of biological role, tetrapolymerization of the monopyrrole PBG into the hydroxymethylbilane pre-uroporphyrinogen in several discrete steps. This is Porphobilinogen deaminase from Fusobacterium nucleatum subsp. nucleatum (strain ATCC 25586 / DSM 15643 / BCRC 10681 / CIP 101130 / JCM 8532 / KCTC 2640 / LMG 13131 / VPI 4355).